Consider the following 318-residue polypeptide: Transcription factor MYBS3 (318 aa).

2 disordered regions span residues 1-20 (MTRR…TCPN) and 50-98 (AAGS…PWTE). A CCHC-type zinc finger spans residues 3–20 (RRCSHCSHNGHNSRTCPN). Residues 8-18 (CSHNGHNSRTC) are compositionally biased toward polar residues. Over residues 50-77 (AAGSTSGGASPADGPDAAPTAADGYASD) the composition is skewed to low complexity. Residues 88 to 144 (RDRKKGVPWTEEEHRRFLLGLQKLGKGDWRGISRNFVVSRTPTQVASHAQKYFIRQS) enclose the HTH myb-type domain. The segment at residues 116–140 (WRGISRNFVVSRTPTQVASHAQKYF) is a DNA-binding region (H-T-H motif). A disordered region spans residues 159 to 200 (VPDESMDLPPLPGGQEPETQVLNQPALPPPREEEEVDSMESD).

Expressed in all tissues, with the highest level in senescent leaves.

It localises to the nucleus. Transcription repressor that binds to 5'-TATCCA-3' elements in gene promoters. Contributes to the sugar-repressed transcription of promoters containing SRS or 5'-TATCCA-3' elements. Transcription repressor involved in a cold stress response pathway that confers cold tolerance. Suppresses the DREB1-dependent signaling pathway under prolonged cold stress. DREB1 responds quickly and transiently while MYBS3 responds slowly to cold stress. They may act sequentially and complementarily for adaptation to short- and long-term cold stress. The protein is Transcription factor MYBS3 of Oryza sativa subsp. japonica (Rice).